We begin with the raw amino-acid sequence, 413 residues long: Multifunctional CCA protein (413 aa).

Gly8 and Arg11 together coordinate ATP. CTP-binding residues include Gly8 and Arg11. Positions 21 and 23 each coordinate Mg(2+). ATP is bound by residues Arg91, Arg143, and Arg146. Arg91, Arg143, and Arg146 together coordinate CTP. The HD domain occupies 232 to 333 (TGVHVMMVID…VRLLERADAL (102 aa)).

It belongs to the tRNA nucleotidyltransferase/poly(A) polymerase family. Bacterial CCA-adding enzyme type 1 subfamily. As to quaternary structure, monomer. Can also form homodimers and oligomers. Requires Mg(2+) as cofactor. The cofactor is Ni(2+).

It catalyses the reaction a tRNA precursor + 2 CTP + ATP = a tRNA with a 3' CCA end + 3 diphosphate. It carries out the reaction a tRNA with a 3' CCA end + 2 CTP + ATP = a tRNA with a 3' CCACCA end + 3 diphosphate. Functionally, catalyzes the addition and repair of the essential 3'-terminal CCA sequence in tRNAs without using a nucleic acid template. Adds these three nucleotides in the order of C, C, and A to the tRNA nucleotide-73, using CTP and ATP as substrates and producing inorganic pyrophosphate. tRNA 3'-terminal CCA addition is required both for tRNA processing and repair. Also involved in tRNA surveillance by mediating tandem CCA addition to generate a CCACCA at the 3' terminus of unstable tRNAs. While stable tRNAs receive only 3'-terminal CCA, unstable tRNAs are marked with CCACCA and rapidly degraded. In Burkholderia mallei (strain NCTC 10247), this protein is Multifunctional CCA protein.